The primary structure comprises 369 residues: Flagellar P-ring protein (369 aa).

Positions 1–22 (MLNFKHLMAAALLLSTSLGVQA) are cleaved as a signal peptide.

It belongs to the FlgI family. As to quaternary structure, the basal body constitutes a major portion of the flagellar organelle and consists of four rings (L,P,S, and M) mounted on a central rod.

The protein resides in the periplasm. It localises to the bacterial flagellum basal body. Functionally, assembles around the rod to form the L-ring and probably protects the motor/basal body from shearing forces during rotation. The polypeptide is Flagellar P-ring protein (Pseudomonas fluorescens (strain ATCC BAA-477 / NRRL B-23932 / Pf-5)).